A 108-amino-acid chain; its full sequence is UPF0145 protein gll1048 (108 aa).

It belongs to the UPF0145 family.

This is UPF0145 protein gll1048 from Gloeobacter violaceus (strain ATCC 29082 / PCC 7421).